The sequence spans 70 residues: UPF0270 protein VIBHAR_00073 (70 aa).

This sequence belongs to the UPF0270 family.

This is UPF0270 protein VIBHAR_00073 from Vibrio campbellii (strain ATCC BAA-1116).